A 186-amino-acid polypeptide reads, in one-letter code: ATP synthase subunit delta (186 aa).

It belongs to the ATPase delta chain family. In terms of assembly, F-type ATPases have 2 components, F(1) - the catalytic core - and F(0) - the membrane proton channel. F(1) has five subunits: alpha(3), beta(3), gamma(1), delta(1), epsilon(1). CF(0) has four main subunits: a(1), b(1), b'(1) and c(10-14). The alpha and beta chains form an alternating ring which encloses part of the gamma chain. F(1) is attached to F(0) by a central stalk formed by the gamma and epsilon chains, while a peripheral stalk is formed by the delta, b and b' chains.

It localises to the cell inner membrane. F(1)F(0) ATP synthase produces ATP from ADP in the presence of a proton or sodium gradient. F-type ATPases consist of two structural domains, F(1) containing the extramembraneous catalytic core and F(0) containing the membrane proton channel, linked together by a central stalk and a peripheral stalk. During catalysis, ATP synthesis in the catalytic domain of F(1) is coupled via a rotary mechanism of the central stalk subunits to proton translocation. Functionally, this protein is part of the stalk that links CF(0) to CF(1). It either transmits conformational changes from CF(0) to CF(1) or is implicated in proton conduction. This Rhodopseudomonas palustris (strain ATCC BAA-98 / CGA009) protein is ATP synthase subunit delta.